The primary structure comprises 530 residues: Arginine--tRNA ligase (530 aa).

The 'HIGH' region motif lies at 113-123; the sequence is ANPTGPLHIGH.

This sequence belongs to the class-I aminoacyl-tRNA synthetase family. In terms of assembly, monomer.

Its subcellular location is the cytoplasm. It carries out the reaction tRNA(Arg) + L-arginine + ATP = L-arginyl-tRNA(Arg) + AMP + diphosphate. This is Arginine--tRNA ligase from Campylobacter jejuni subsp. jejuni serotype O:23/36 (strain 81-176).